The following is a 794-amino-acid chain: MQVRVRLLLLLCAVLLGSAAASSDEETNQDESLDSKGALPTDGSVKDHTTGKVVLLARDLLILKDSEVESLLQDEEESSKSQEEVSVTEDISFLDSPNPSSKTYEELKRVRKPVLTAIEGTAHGEPCHFPFLFLDKEYDECTSDGREDGRLWCATTYDYKTDEKWGFCETEEDAAKRRQMQEAEAIYQSGMKILNGSTRKNQKREAYRYLQKAAGMNHTKALERVSYALLFGDYLTQNIQAAKEMFEKLTEEGSPKGQTGLGFLYASGLGVNSSQAKALVYYTFGALGGNLIAHMVLGYRYWAGIGVLQSCESALTHYRLVANHVASDISLTGGSVVQRIRLPDEVENPGMNSGMLEEDLIQYYQFLAEKGDVQAQVGLGQLHLHGGRGVEQNHQRAFDYFNLAANAGNSHAMAFLGKMYSEGSDIVPQSNETALHYFKKAADMGNPVGQSGLGMAYLYGRGVQVNYDLALKYFQKAAEQGWVDGQLQLGSMYYNGIGVKRDYKQALKYFNLASQGGHILAFYNLAQMHASGTGVMRSCHTAVELFKNVCERGRWSERLMTAYNSYKDDDYNAAVVQYLLLAEQGYEVAQSNAAFILDQREATIVGENETYPRALLHWNRAASQGYTVARIKLGDYHFYGFGTDVDYETAFIHYRLASEQQHSAQAMFNLGYMHEKGLGIKQDIHLAKRFYDMAAEASPDAQVPVFLALCKLGVVYFLQYIREANIRDLFTQLDMDQLLGPEWDLYLMTIIALLLGTVIAYRQRQHQDIPVPRPPGPRPAPPQQEGPPEQQPPQ.

The N-terminal stretch at methionine 1–alanine 21 is a signal peptide. The tract at residues serine 22–glutamine 737 is interaction with ERLEC1, OS9 and SYVN1. Residues serine 22 to leucine 738 are Lumenal-facing. The span at serine 23–serine 32 shows a compositional bias: acidic residues. 2 disordered regions span residues serine 23–lysine 46 and glutamine 73–glutamate 105. Positions alanine 122–threonine 170 constitute a Fibronectin type-II domain. Disulfide bonds link cysteine 127/cysteine 153 and cysteine 141/cysteine 168. Sel1-like repeat units lie at residues alanine 183–histidine 218, threonine 219–serine 254, proline 255–asparagine 290, leucine 291–alanine 326, valine 373–asparagine 409, serine 410–asparagine 446, proline 447–tryptophan 482, valine 483–histidine 518, and isoleucine 519–arginine 554. N-linked (GlcNAc...) asparagine glycosylation is found at asparagine 195 and asparagine 217. Asparagine 272 carries N-linked (GlcNAc...) asparagine glycosylation. The segment at asparagine 352–arginine 537 is important for homodimerization and oligomerization. An N-linked (GlcNAc...) asparagine glycan is attached at asparagine 431. Residue asparagine 608 is glycosylated (N-linked (GlcNAc...) asparagine). Sel1-like repeat units follow at residues threonine 627 to histidine 662 and alanine 664 to proline 699. The segment at threonine 643–glutamate 723 is interaction with SYVN1. Residues leucine 738–glutamine 794 are mediates retention in the endoplasmic reticulum. The chain crosses the membrane as a helical span at residues leucine 739 to isoleucine 759. At alanine 760–glutamine 794 the chain is on the cytoplasmic side. A disordered region spans residues glutamine 767–glutamine 794. Residues valine 771–glutamine 794 are compositionally biased toward pro residues.

It belongs to the sel-1 family. As to quaternary structure, homodimer and homooligomer. May form a complex with ERLEC1, HSPA5, OS9, and SYVN1. Interacts with FOXRED2 and EDEM1. Interacts with LPL and LMF1; may stabilize the complex formed by LPL and LMF1 and thereby promote the export of LPL dimers. Component of the HRD1 complex, which comprises at least SYNV1/HRD1, DERL1/2, FAM8A1, HERPUD1/HERP, OS9, SEL1L and UBE2J1. SYNV1 assembles with SEL1L and FAM8A1 through its transmembrane domains, but interaction with its cytoplasmic domain is required to confer stability to FAM8A1 and enhance recruitment of HERPUD1. The interaction with SYNV1/HRD1 is direct. In terms of processing, N-glycosylated.

The protein localises to the endoplasmic reticulum membrane. Its function is as follows. Plays a role in the endoplasmic reticulum quality control (ERQC) system also called ER-associated degradation (ERAD) involved in ubiquitin-dependent degradation of misfolded endoplasmic reticulum proteins. Enhances SYVN1 stability. Plays a role in LPL maturation and secretion. Required for normal differentiation of the pancreas epithelium, and for normal exocrine function and survival of pancreatic cells. May play a role in Notch signaling. The protein is Protein sel-1 homolog 1 (Sel1l) of Rattus norvegicus (Rat).